The sequence spans 109 residues: EPIDERMAL PATTERNING FACTOR-like protein 4 (109 aa).

An N-terminal signal peptide occupies residues 1 to 26 (MGTFRRRRRFLLAALVTFALLHLFSA). Disulfide bonds link Cys-66–Cys-100, Cys-70–Cys-76, and Cys-73–Cys-102.

The protein belongs to the plant cysteine rich small secretory peptide family. Epidermal patterning factor subfamily. As to quaternary structure, interacts with ERECTA. In terms of tissue distribution, expressed at the base of the apical meristem at 3 days after germination. Not detected in the hypocotyl. Expressed in developing stems soon after bolting, in inflorescence stems and in young siliques.

The protein resides in the secreted. Its function is as follows. Acts primarily as positive regulator of inflorescence growth. Endodermal expression is sufficient for proper inflorescence architecture. Redundantly involved with EPFL6 in procambial development regulation. Controls stomatal patterning. Mediates stomatal development inhibition. TMM (AC Q9SSD1) functions to dampen or block CLL2 signaling. Acts as a growth-regulatory ligand for ERECTA family receptors. The chain is EPIDERMAL PATTERNING FACTOR-like protein 4 from Arabidopsis thaliana (Mouse-ear cress).